Consider the following 104-residue polypeptide: MAAKIRRNDEVIVLVGKDKGKKGKVTKVLETGKVIVEGINLVKKHQKPVPALGQQGGIVEKEAAIDASNIAIYNEATGKADRIGFRFEEGKKVRFFKSNGETIK.

This sequence belongs to the universal ribosomal protein uL24 family. Part of the 50S ribosomal subunit.

Its function is as follows. One of two assembly initiator proteins, it binds directly to the 5'-end of the 23S rRNA, where it nucleates assembly of the 50S subunit. In terms of biological role, one of the proteins that surrounds the polypeptide exit tunnel on the outside of the subunit. The protein is Large ribosomal subunit protein uL24 of Aliivibrio fischeri (strain ATCC 700601 / ES114) (Vibrio fischeri).